The sequence spans 86 residues: Small ribosomal subunit protein bS20 (86 aa).

Residues 1–26 form a disordered region; sequence MANIKSAKKRAITSEKRRQHNASRRS.

This sequence belongs to the bacterial ribosomal protein bS20 family.

Its function is as follows. Binds directly to 16S ribosomal RNA. The protein is Small ribosomal subunit protein bS20 of Photobacterium profundum (strain SS9).